Here is a 1026-residue protein sequence, read N- to C-terminus: Multidrug resistance protein MdtC (1026 aa).

A run of 12 helical transmembrane segments spans residues 12 to 32, 333 to 353, 360 to 380, 387 to 407, 431 to 451, 463 to 483, 528 to 548, 853 to 873, 875 to 895, 897 to 917, 953 to 973, and 984 to 1004; these read VATL…FRLL, EVEQ…FLFL, AIPA…MYLC, LSLM…IVVL, VGFT…PLLL, FAVT…TLTP, WVLL…ISIP, LLLI…LYES, VHPL…LLAL, WFGA…IGIV, PIMM…LTSG, and ITIV…TPVV.

Belongs to the resistance-nodulation-cell division (RND) (TC 2.A.6) family. MdtC subfamily. As to quaternary structure, part of a tripartite efflux system composed of MdtA, MdtB and MdtC. MdtC forms a heteromultimer with MdtB.

The protein localises to the cell inner membrane. The protein is Multidrug resistance protein MdtC of Pectobacterium carotovorum subsp. carotovorum (strain PC1).